The sequence spans 245 residues: 1-(5-phosphoribosyl)-5-[(5-phosphoribosylamino)methylideneamino] imidazole-4-carboxamide isomerase (245 aa).

Asp7 acts as the Proton acceptor in catalysis. Asp129 acts as the Proton donor in catalysis.

This sequence belongs to the HisA/HisF family.

The protein localises to the cytoplasm. It catalyses the reaction 1-(5-phospho-beta-D-ribosyl)-5-[(5-phospho-beta-D-ribosylamino)methylideneamino]imidazole-4-carboxamide = 5-[(5-phospho-1-deoxy-D-ribulos-1-ylimino)methylamino]-1-(5-phospho-beta-D-ribosyl)imidazole-4-carboxamide. It functions in the pathway amino-acid biosynthesis; L-histidine biosynthesis; L-histidine from 5-phospho-alpha-D-ribose 1-diphosphate: step 4/9. The chain is 1-(5-phosphoribosyl)-5-[(5-phosphoribosylamino)methylideneamino] imidazole-4-carboxamide isomerase from Aliivibrio salmonicida (strain LFI1238) (Vibrio salmonicida (strain LFI1238)).